Here is a 153-residue protein sequence, read N- to C-terminus: Nuclear cap-binding protein subunit 2 (153 aa).

Residues tyrosine 17, tyrosine 40, 109 to 113 (RTDWD), 120 to 124 (RQYGR), and 130 to 131 (QV) contribute to the mRNA site. Positions 37-115 (CTLYVGNLSF…RIIRTDWDAG (79 aa)) constitute an RRM domain.

It belongs to the RRM NCBP2 family. As to quaternary structure, component of the nuclear cap-binding complex (CBC), a heterodimer composed of ncbp1/cbp80 and ncbp2/cbp20 that interacts with m7GpppG-capped RNA.

The protein localises to the nucleus. The protein resides in the cytoplasm. Functionally, component of the cap-binding complex (CBC), which binds co-transcriptionally to the 5' cap of pre-mRNAs and is involved in various processes such as pre-mRNA splicing, translation regulation, nonsense-mediated mRNA decay, RNA-mediated gene silencing (RNAi) by microRNAs (miRNAs) and mRNA export. The CBC complex is involved in mRNA export from the nucleus, leading to the recruitment of the mRNA export machinery to the 5' end of mRNA and to mRNA export in a 5' to 3' direction through the nuclear pore. The CBC complex is also involved in mediating U snRNA and intronless mRNAs export from the nucleus. The CBC complex is essential for a pioneer round of mRNA translation, before steady state translation when the CBC complex is replaced by cytoplasmic cap-binding protein eIF4E. The pioneer round of mRNA translation mediated by the CBC complex plays a central role in nonsense-mediated mRNA decay (NMD), NMD only taking place in mRNAs bound to the CBC complex, but not on eIF4E-bound mRNAs. The CBC complex enhances NMD in mRNAs containing at least one exon-junction complex (EJC), promoting the interaction between upf1 and upf2. The CBC complex is also involved in 'failsafe' NMD, which is independent of the EJC complex, while it does not participate in Staufen-mediated mRNA decay (SMD). During cell proliferation, the CBC complex is also involved in microRNAs (miRNAs) biogenesis via its interaction with srrt/ars2, thereby being required for miRNA-mediated RNA interference. The CBC complex also acts as a negative regulator of parn, thereby acting as an inhibitor of mRNA deadenylation. In the CBC complex, ncbp2/cbp20 recognizes and binds capped RNAs (m7GpppG-capped RNA) but requires ncbp1/cbp80 to stabilize the movement of its N-terminal loop and lock the CBC into a high affinity cap-binding state with the cap structure. The conventional cap-binding complex with NCBP2 binds both small nuclear RNA (snRNA) and messenger (mRNA) and is involved in their export from the nucleus. The protein is Nuclear cap-binding protein subunit 2 (ncbp2) of Xenopus tropicalis (Western clawed frog).